Consider the following 265-residue polypeptide: Phosphatidylserine decarboxylase proenzyme (265 aa).

The active-site Schiff-base intermediate with substrate; via pyruvic acid is Ser183. Position 183 is a pyruvic acid (Ser); by autocatalysis (Ser183). The disordered stretch occupies residues 216 to 246 (TAPQTESEPESEPALQTAPVETAANPSAEQR).

It belongs to the phosphatidylserine decarboxylase family. PSD-A subfamily. Heterodimer of a large membrane-associated beta subunit and a small pyruvoyl-containing alpha subunit. Pyruvate serves as cofactor. In terms of processing, is synthesized initially as an inactive proenzyme. Formation of the active enzyme involves a self-maturation process in which the active site pyruvoyl group is generated from an internal serine residue via an autocatalytic post-translational modification. Two non-identical subunits are generated from the proenzyme in this reaction, and the pyruvate is formed at the N-terminus of the alpha chain, which is derived from the carboxyl end of the proenzyme. The post-translation cleavage follows an unusual pathway, termed non-hydrolytic serinolysis, in which the side chain hydroxyl group of the serine supplies its oxygen atom to form the C-terminus of the beta chain, while the remainder of the serine residue undergoes an oxidative deamination to produce ammonia and the pyruvoyl prosthetic group on the alpha chain.

It localises to the cell membrane. The enzyme catalyses a 1,2-diacyl-sn-glycero-3-phospho-L-serine + H(+) = a 1,2-diacyl-sn-glycero-3-phosphoethanolamine + CO2. It functions in the pathway phospholipid metabolism; phosphatidylethanolamine biosynthesis; phosphatidylethanolamine from CDP-diacylglycerol: step 2/2. In terms of biological role, catalyzes the formation of phosphatidylethanolamine (PtdEtn) from phosphatidylserine (PtdSer). This chain is Phosphatidylserine decarboxylase proenzyme, found in Neisseria meningitidis serogroup B (strain ATCC BAA-335 / MC58).